Reading from the N-terminus, the 185-residue chain is UPF0301 protein PSHAa2600 (185 aa).

Belongs to the UPF0301 (AlgH) family.

The sequence is that of UPF0301 protein PSHAa2600 from Pseudoalteromonas translucida (strain TAC 125).